A 298-amino-acid chain; its full sequence is Tyrosine recombinase XerC (298 aa).

In terms of domain architecture, Core-binding (CB) spans T2–V88. A Tyr recombinase domain is found at H109–D288. Active-site residues include R148, K172, H240, R243, and H266. Residue Y275 is the O-(3'-phospho-DNA)-tyrosine intermediate of the active site.

Belongs to the 'phage' integrase family. XerC subfamily. As to quaternary structure, forms a cyclic heterotetrameric complex composed of two molecules of XerC and two molecules of XerD, in which XerC interacts with XerD via its C-terminal region, XerD interacts with XerC via its C-terminal region and so on.

It localises to the cytoplasm. FtsK may regulate the catalytic switch between XerC and XerD in the heterotetrameric complex during the two steps of the recombination process. Site-specific tyrosine recombinase, which acts by catalyzing the cutting and rejoining of the recombining DNA molecules. Binds cooperatively to specific DNA consensus sequences that are separated from XerD binding sites by a short central region, forming the heterotetrameric XerC-XerD complex that recombines DNA substrates. The complex is essential to convert dimers of the bacterial chromosome into monomers to permit their segregation at cell division. It also contributes to the segregational stability of plasmids. In the complex XerC specifically exchanges the top DNA strands. This Escherichia coli O139:H28 (strain E24377A / ETEC) protein is Tyrosine recombinase XerC.